The following is a 251-amino-acid chain: Segregation and condensation protein A (251 aa).

It belongs to the ScpA family. As to quaternary structure, component of a cohesin-like complex composed of ScpA, ScpB and the Smc homodimer, in which ScpA and ScpB bind to the head domain of Smc. The presence of the three proteins is required for the association of the complex with DNA.

Its subcellular location is the cytoplasm. Functionally, participates in chromosomal partition during cell division. May act via the formation of a condensin-like complex containing Smc and ScpB that pull DNA away from mid-cell into both cell halves. The chain is Segregation and condensation protein A from Clostridium botulinum (strain Eklund 17B / Type B).